The sequence spans 240 residues: 4-hydroxy-tetrahydrodipicolinate reductase (240 aa).

NAD(+) is bound by residues alanine 79–threonine 81 and serine 103–methionine 106. The active-site Proton donor/acceptor is histidine 135. Histidine 136 contributes to the (S)-2,3,4,5-tetrahydrodipicolinate binding site. Lysine 139 (proton donor) is an active-site residue. (S)-2,3,4,5-tetrahydrodipicolinate is bound at residue glycine 145–threonine 146.

It belongs to the DapB family.

The protein localises to the cytoplasm. It carries out the reaction (S)-2,3,4,5-tetrahydrodipicolinate + NAD(+) + H2O = (2S,4S)-4-hydroxy-2,3,4,5-tetrahydrodipicolinate + NADH + H(+). The enzyme catalyses (S)-2,3,4,5-tetrahydrodipicolinate + NADP(+) + H2O = (2S,4S)-4-hydroxy-2,3,4,5-tetrahydrodipicolinate + NADPH + H(+). The protein operates within amino-acid biosynthesis; L-lysine biosynthesis via DAP pathway; (S)-tetrahydrodipicolinate from L-aspartate: step 4/4. Functionally, catalyzes the conversion of 4-hydroxy-tetrahydrodipicolinate (HTPA) to tetrahydrodipicolinate. This is 4-hydroxy-tetrahydrodipicolinate reductase from Staphylococcus aureus (strain USA300).